We begin with the raw amino-acid sequence, 307 residues long: 4-hydroxythreonine-4-phosphate dehydrogenase (307 aa).

Residues histidine 126 and threonine 127 each contribute to the substrate site. Residues histidine 156, histidine 195, and histidine 251 each coordinate a divalent metal cation. Substrate contacts are provided by lysine 259, asparagine 268, and arginine 277.

The protein belongs to the PdxA family. In terms of assembly, homodimer. It depends on Zn(2+) as a cofactor. Requires Mg(2+) as cofactor. The cofactor is Co(2+).

The protein resides in the cytoplasm. The catalysed reaction is 4-(phosphooxy)-L-threonine + NAD(+) = 3-amino-2-oxopropyl phosphate + CO2 + NADH. The protein operates within cofactor biosynthesis; pyridoxine 5'-phosphate biosynthesis; pyridoxine 5'-phosphate from D-erythrose 4-phosphate: step 4/5. Catalyzes the NAD(P)-dependent oxidation of 4-(phosphooxy)-L-threonine (HTP) into 2-amino-3-oxo-4-(phosphooxy)butyric acid which spontaneously decarboxylates to form 3-amino-2-oxopropyl phosphate (AHAP). This Helicobacter pylori (strain Shi470) protein is 4-hydroxythreonine-4-phosphate dehydrogenase.